The primary structure comprises 739 residues: Nucleoprotein (739 aa).

The stretch at 334-363 forms a coiled coil; that stretch reads VNVGEQYQQLREAATEAEKQLQQYAESREL. Disordered regions lie at residues 414–475 and 493–641; these read RPNL…YHDD and DDNK…DIGQ. The span at 531–546 shows a compositional bias: polar residues; that stretch reads SDNNQQSADSEEQGGQ. Residues 570–579 show a composition bias toward acidic residues; that stretch reads TLMDQGDDDP. Residues 614–624 show a composition bias toward basic and acidic residues; sequence AEAHEPPHKSS. Over residues 625–634 the composition is skewed to polar residues; sequence NEPAETSQLN.

Belongs to the filoviruses nucleoprotein family. In terms of assembly, homooligomer. Homomultimerizes to form the nucleocapsid. Binds to viral genomic RNA. Interacts with VP35 and VP30 to form the nucleocapsid. Interacts with host PPP2R5C; this interaction leads to VP30 dephosphorylation and viral transcription. Interacts with VP24; this interaction facilitates nucleocapsid assembly and genome packaging. Interacts with matrix protein VP40; this interaction allows recruitment of the nucleocapsid into progeny virions. Interacts with host STAU1. Interacts with host NXF1 (via RNA-binding domain); this interaction recruits NXF1 to the inclusion bodies were viral replication takes place, probably to export viral mRNA-NXF1 complexes from these sites. Interacts with host CCDC92; this interaction sequesters NP in the host cytoplasm. Interacts with host TRIM14. Phosphorylated and O-glycosylated by host. Acetylated by host EP300 in vitro.

It localises to the virion. The protein resides in the host cytoplasm. Functionally, oligomerizes into helical capsid to encapsidate the viral genome, protecting it from nucleases and the cellular innate immune response. VP35 binds to and stabilizes monomeric NP, keeping it soluble. Upon virus replication, NP is recruited to bind cooperatively viral genomic RNA and VP35 is released. The encapsidated genomic RNA is termed the nucleocapsid and serves as template for transcription and replication. The nucleocapsid is helical with a pitch of 10.81 NP per turn and a diameter of about 22nm. Each NP binds to six nucleotides of viral genomic RNA, three being exposed to the solvant and three hidden into the nucleocapsid. Also recruits host PPP2R5C phosphatase to dephosphorylate VP30 and thereby promote viral transcription. Upon virion assembly and budding, NP binds to VP24 and possibly host STAU1. This chain is Nucleoprotein (NP), found in Reston ebolavirus (strain Reston-89) (REBOV).